A 208-amino-acid polypeptide reads, in one-letter code: Probable GTP-binding protein EngB (208 aa).

The EngB-type G domain occupies 23-205; sequence LTSEMVILGR…RQTLLKYLLT (183 aa). Residues 31–38, 57–61, 84–87, 154–157, and 182–184 each bind GTP; these read GRSNVGKS, GKTRL, DLPG, TKFD, and FNA. 2 residues coordinate Mg(2+): Ser-38 and Thr-59.

This sequence belongs to the TRAFAC class TrmE-Era-EngA-EngB-Septin-like GTPase superfamily. EngB GTPase family. Requires Mg(2+) as cofactor.

Functionally, necessary for normal cell division and for the maintenance of normal septation. This is Probable GTP-binding protein EngB from Helicobacter pylori (strain HPAG1).